Here is a 355-residue protein sequence, read N- to C-terminus: 3-isopropylmalate dehydrogenase (355 aa).

4 residues coordinate substrate: Arg98, Arg108, Arg132, and Asp223. Mg(2+)-binding residues include Asp223, Asp247, and Asp251. An NAD(+)-binding site is contributed by 283 to 295 (GSAPDIAGQQKAD).

It belongs to the isocitrate and isopropylmalate dehydrogenases family. LeuB type 2 subfamily. As to quaternary structure, homodimer. The cofactor is Mg(2+). Requires Mn(2+) as cofactor.

Its subcellular location is the cytoplasm. The enzyme catalyses (2R,3S)-3-isopropylmalate + NAD(+) = 4-methyl-2-oxopentanoate + CO2 + NADH. It participates in amino-acid biosynthesis; L-leucine biosynthesis; L-leucine from 3-methyl-2-oxobutanoate: step 3/4. Its function is as follows. Catalyzes the oxidation of 3-carboxy-2-hydroxy-4-methylpentanoate (3-isopropylmalate) to 3-carboxy-4-methyl-2-oxopentanoate. The product decarboxylates to 4-methyl-2 oxopentanoate. This is 3-isopropylmalate dehydrogenase from Clavibacter michiganensis subsp. michiganensis (strain NCPPB 382).